Here is a 218-residue protein sequence, read N- to C-terminus: MGTLLALVVGAALVSSAWGGCVEVDSETEAVYGMTFKILCISCKRRSETTAETFTEWTFRQKGTEEFVKILRYENEVLQLEEDERFEGRVVWNGSRGTKDLQDLSIFITNVTYNHSGDYECHVYRLLFFENYEHNTSVVKKIHIEVVDKANRDMASIVSEIMMYVLIVVLTIWLVAEMVYCYKKIAAATEAAAQENASEYLAITSESKENCTGVQVAE.

The signal sequence occupies residues 1-18 (MGTLLALVVGAALVSSAW). The Extracellular segment spans residues 19–157 (GGCVEVDSET…DKANRDMASI (139 aa)). Disulfide bonds link Cys21–Cys43 and Cys40–Cys121. The Ig-like C2-type domain maps to 22–150 (VEVDSETEAV…KIHIEVVDKA (129 aa)). Asn93, Asn110, Asn114, and Asn135 each carry an N-linked (GlcNAc...) asparagine glycan. The chain crosses the membrane as a helical span at residues 158-179 (VSEIMMYVLIVVLTIWLVAEMV). At 180-218 (YCYKKIAAATEAAAQENASEYLAITSESKENCTGVQVAE) the chain is on the cytoplasmic side.

The protein belongs to the sodium channel auxiliary subunit SCN1B (TC 8.A.17) family. In terms of assembly, a voltage-gated sodium (Nav) channel consists of an ion-conducting pore-forming alpha subunit functional on its own that is regulated by one or more beta subunits. Interacts with SCN1A; regulatory subunit of SCN1A/Nav1.1. Interacts with SCN3A; regulatory subunit of SCN3A/Nav1.3. Interacts with SCN4A; regulatory subunit of SCN4A/Nav1.4. Interacts with SCN5A; regulatory subunit of SCN5A/Nav1.5. Interacts with SCN8A; regulatory subunit of SCN8A/Nav1.6. Interacts with SCN9A; regulatory subunit of SCN9A/Nav1.7. Interacts with SCN10A; regulatory subunit of SCN10A/Nav1.8. Interacts with NFASC. Interacts with TMEM65.

Its subcellular location is the cell membrane. The protein localises to the perikaryon. The protein resides in the cell projection. It is found in the axon. Regulatory subunit of multiple voltage-gated sodium (Nav) channels directly mediating the depolarization of excitable membranes. Navs, also called VGSCs (voltage-gated sodium channels) or VDSCs (voltage-dependent sodium channels), operate by switching between closed and open conformations depending on the voltage difference across the membrane. In the open conformation they allow Na(+) ions to selectively pass through the pore, along their electrochemical gradient. The influx of Na+ ions provokes membrane depolarization, initiating the propagation of electrical signals throughout cells and tissues. The accessory beta subunits participate in localization and functional modulation of the Nav channels. Modulates the activity of SCN1A/Nav1.1, SCN2A/Nav1.2, SCN3A/Nav1.3, SCN4A/Nav1.4, SCN5A/Nav1.5, SCN8A/Nav1.6, SCN9A/Nav1.7 and SCN10A/Nav1.8. The protein is Sodium channel regulatory subunit beta-1 of Canis lupus familiaris (Dog).